Reading from the N-terminus, the 543-residue chain is Phenylalanine--tRNA ligase beta subunit (543 aa).

Residues 269 to 344 form the B5 domain; the sequence is FDFRIMRPAR…KSKGIENIEE (76 aa). Mg(2+)-binding residues include aspartate 322, aspartate 328, glutamate 331, and aspartate 332.

It belongs to the phenylalanyl-tRNA synthetase beta subunit family. Type 2 subfamily. As to quaternary structure, tetramer of two alpha and two beta subunits. Requires Mg(2+) as cofactor.

It localises to the cytoplasm. The catalysed reaction is tRNA(Phe) + L-phenylalanine + ATP = L-phenylalanyl-tRNA(Phe) + AMP + diphosphate + H(+). The protein is Phenylalanine--tRNA ligase beta subunit of Thermoplasma acidophilum (strain ATCC 25905 / DSM 1728 / JCM 9062 / NBRC 15155 / AMRC-C165).